A 350-amino-acid chain; its full sequence is Phosphate acyltransferase (350 aa).

The protein belongs to the PlsX family. As to quaternary structure, homodimer. Probably interacts with PlsY.

It localises to the cytoplasm. It carries out the reaction a fatty acyl-[ACP] + phosphate = an acyl phosphate + holo-[ACP]. It participates in lipid metabolism; phospholipid metabolism. Catalyzes the reversible formation of acyl-phosphate (acyl-PO(4)) from acyl-[acyl-carrier-protein] (acyl-ACP). This enzyme utilizes acyl-ACP as fatty acyl donor, but not acyl-CoA. The chain is Phosphate acyltransferase from Phenylobacterium zucineum (strain HLK1).